Consider the following 133-residue polypeptide: uncharacterized protein (133 aa).

The signal sequence occupies residues 1 to 22 (MYRSSISIQVFICVLFLPLDSG). Asn111 carries an N-linked (GlcNAc...) asparagine glycan.

The protein localises to the secreted. This is an uncharacterized protein from Saccharomyces cerevisiae (strain ATCC 204508 / S288c) (Baker's yeast).